A 139-amino-acid chain; its full sequence is Cofilin (139 aa).

Positions 4–135 (GVKVSQECLD…SYDTVLDKVS (132 aa)) constitute an ADF-H domain.

Belongs to the actin-binding proteins ADF family.

It is found in the cytoplasm. The protein localises to the cytoskeleton. Its subcellular location is the nucleus matrix. Functionally, controls reversibly actin polymerization and depolymerization in a pH-sensitive manner. It has the ability to bind G- and F-actin in a 1:1 ratio of cofilin to actin. Binding to F-actin is regulated by tropomyosin. It is the major component of intranuclear and cytoplasmic actin rods. Required for accumulation of actin at the cell division site via depolymerizing actin at the cell ends. In association with myosin II has a role in the assembly of the contractile ring via severing actin filaments. Involved in the maintenance of the contractile ring once formed. In association with profilin and capping protein, has a role in the mitotic reorganization of the actin cytoskeleton. This Mycosarcoma maydis (Corn smut fungus) protein is Cofilin (COF1).